Reading from the N-terminus, the 424-residue chain is 3-oxo-tetronate kinase (424 aa).

ATP is bound by residues serine 264, glycine 363–threonine 366, and glycine 408.

This sequence belongs to the four-carbon acid sugar kinase family.

The enzyme catalyses 3-dehydro-L-erythronate + ATP = 3-dehydro-4-O-phospho-L-erythronate + ADP + H(+). It catalyses the reaction 3-dehydro-D-erythronate + ATP = 3-dehydro-4-O-phospho-D-erythronate + ADP + H(+). Catalyzes the ATP-dependent phosphorylation of 3-oxo-tetronate to 3-oxo-tetronate 4-phosphate. This is 3-oxo-tetronate kinase from Methylobacterium radiotolerans (strain ATCC 27329 / DSM 1819 / JCM 2831 / NBRC 15690 / NCIMB 10815 / 0-1).